A 25-amino-acid polypeptide reads, in one-letter code: CKGKGASCRRTSYDCCTGSCRLGRC.

Cystine bridges form between cysteine 1–cysteine 16, cysteine 8–cysteine 20, and cysteine 15–cysteine 25. A Cysteine amide modification is found at cysteine 25.

The protein belongs to the conotoxin O1 superfamily. In terms of tissue distribution, expressed by the venom duct.

It localises to the secreted. In terms of biological role, omega-conotoxins act at presynaptic membranes, they bind and block voltage-gated calcium channels. This toxin blocks N-type calcium channels (Cav2.2/CACNA1B). It shows a higher potency when Cav2.2/CACNA1B is only expressed with the ancillary subunit CACNB3 (IC(50)=0.1 nM) than on Cav2.2/CACNA1B expressed with the ancillary subunits CACNA2D1 and CACNB3 (IC(50)=19.9 nM). The Cav2.2/CACNA1B block by this toxin is voltage-independent, whereas the recovery from toxin block is voltage-dependent. There is a low recovery at physiological membrane potential and a high recovery with hyperpolarized potential. This indicates that the toxin has a higher affinity for Cav2.2/CACNA1B in the inactivated state. It is noteworthy that ancillary subunits beta modulate recovery from this toxin block. Cav2.2/CACNA1B expressed with the ancillary subunit CACNB2a (isoform 2a) almost recover completely from this toxin block, whereas an expression with CACNB3 exhibits relatively weak recovery. Inhibition by this toxin of excitatory synaptic transmission is reversible. In vivo, when tested on rat model of persistent pain, this toxin blocks chronic pain behavior. This is Omega conotoxin-CVIF from Conus catus (Cat cone).